The sequence spans 377 residues: Chaperone protein DnaJ (377 aa).

Residues 5–70 form the J domain; it reads DFYEVLGVER…SKRAAYDQYG (66 aa). The CR-type zinc-finger motif lies at 136-214; it reads GTTVTIRVPT…CHGQGRVEEQ (79 aa). C149, C152, C166, C169, C188, C191, C202, and C205 together coordinate Zn(2+). CXXCXGXG motif repeat units follow at residues 149 to 156, 166 to 173, 188 to 195, and 202 to 209; these read CKTCNGSG, CTTCGGIG, CPRCHGTG, and CGSCHGQG.

It belongs to the DnaJ family. Homodimer. Zn(2+) serves as cofactor.

Its subcellular location is the cytoplasm. Participates actively in the response to hyperosmotic and heat shock by preventing the aggregation of stress-denatured proteins and by disaggregating proteins, also in an autonomous, DnaK-independent fashion. Unfolded proteins bind initially to DnaJ; upon interaction with the DnaJ-bound protein, DnaK hydrolyzes its bound ATP, resulting in the formation of a stable complex. GrpE releases ADP from DnaK; ATP binding to DnaK triggers the release of the substrate protein, thus completing the reaction cycle. Several rounds of ATP-dependent interactions between DnaJ, DnaK and GrpE are required for fully efficient folding. Also involved, together with DnaK and GrpE, in the DNA replication of plasmids through activation of initiation proteins. This Pseudomonas paraeruginosa (strain DSM 24068 / PA7) (Pseudomonas aeruginosa (strain PA7)) protein is Chaperone protein DnaJ.